Here is a 109-residue protein sequence, read N- to C-terminus: Large ribosomal subunit protein eL42 (109 aa).

The tract at residues 23–53 (VSQYKKSKESTHAQGRRRYDMKQSGFGGQTK) is disordered. Residues 28–43 (KSKESTHAQGRRRYDM) show a composition bias toward basic and acidic residues.

It belongs to the eukaryotic ribosomal protein eL42 family.

Its subcellular location is the cytoplasm. This chain is Large ribosomal subunit protein eL42 (RPL36A), found in Tetrahymena thermophila (strain SB210).